The chain runs to 760 residues: UDP-N-acetylmuramoyl-L-alanyl-D-glutamate--2,6-diaminopimelate ligase MurE homolog, chloroplastic (760 aa).

A chloroplast-targeting transit peptide spans 1–59 (MATAPLAFRLPFPFSFPSASRPPPSRILAPPTPRRLPLRLAAAAARRFRPPTADDEPPE). Disordered regions lie at residues 13 to 159 (PFSF…TDEL) and 176 to 205 (LSVVSVADEEDEEVEGGEDEDDGLPLDEDG). Residues 20 to 34 (SRPPPSRILAPPTPR) are compositionally biased toward pro residues. Residues 53 to 62 (ADDEPPEAAE) show a composition bias toward acidic residues. A compositionally biased stretch (basic and acidic residues) spans 118 to 132 (EIDRAIAEKREEFTR). Composition is skewed to acidic residues over residues 150-159 (PEDEDLTDEL) and 182-205 (ADEEDEEVEGGEDEDDGLPLDEDG).

It belongs to the MurCDEF family. MurE subfamily. As to quaternary structure, component of the plastid-encoded plastid RNA polymerase (PEP) complex.

The protein localises to the plastid. The protein resides in the chloroplast. Functionally, required for the activity of the plastid-encoded RNA polymerase (PEP) and full expression of genes transcribed by PEP. Required for the proper build-up and formation of the PEP-complex. The polypeptide is UDP-N-acetylmuramoyl-L-alanyl-D-glutamate--2,6-diaminopimelate ligase MurE homolog, chloroplastic (Zea mays (Maize)).